The primary structure comprises 396 residues: Purine ribonucleoside efflux pump NepI (396 aa).

Over 1 to 21 the chain is Cytoplasmic; it reads MSEFIAENRGADAITRPNWSA. Residues 22–42 traverse the membrane as a helical segment; sequence VFSVAFCVACLIIVEFLPVSL. The Periplasmic portion of the chain corresponds to 43–54; that stretch reads LTPMAQDLGISE. The helical transmembrane segment at 55–75 threads the bilayer; the sequence is GVAGQSVTVTAFVAMFASLFI. At 76–85 the chain is on the cytoplasmic side; that stretch reads TQTIQATDRR. The chain crosses the membrane as a helical span at residues 86-106; the sequence is YVVILFAVLLTLSCLLVSFAN. Residue Ser107 is a topological domain, periplasmic. The helical transmembrane segment at 108–128 threads the bilayer; it reads FSLLLIGRACLGLALGGFWAM. The Cytoplasmic segment spans residues 129–147; sequence SASLTMRLVPPRTVPKALS. Residues 148 to 168 form a helical membrane-spanning segment; sequence VIFGAVSIALVIAAPLGSFLG. Over 169 to 175 the chain is Periplasmic; that stretch reads ELIGWRN. The chain crosses the membrane as a helical span at residues 176 to 196; that stretch reads VFNAAAVMGVLCIFWIIKSLP. Topologically, residues 197 to 215 are cytoplasmic; that stretch reads SLPGEPSHQKQNTFRLLQR. The helical transmembrane segment at 216–236 threads the bilayer; the sequence is PGVMAGMIAIFMSFAGQFAFF. Residues 237-255 lie on the Periplasmic side of the membrane; the sequence is TYIRPVYMNLAGFGVDGLT. A helical transmembrane segment spans residues 256–276; sequence LVLLSFGIASFIGTSLSSFIL. The Cytoplasmic portion of the chain corresponds to 277–281; the sequence is KRSVK. Residues 282–302 form a helical membrane-spanning segment; sequence LALAGAPLILAVSALVLTLWG. Residues 303-305 lie on the Periplasmic side of the membrane; the sequence is SDK. Residues 306–326 traverse the membrane as a helical segment; it reads IVATGVAIIWGLTFALVPVGW. Topologically, residues 327–343 are cytoplasmic; it reads STWITRSLADQAEKAGS. Residues 344 to 364 traverse the membrane as a helical segment; sequence IQVAVIQLANTCGAAIGGYAL. Topologically, residues 365–366 are periplasmic; the sequence is DN. Residues 367–387 traverse the membrane as a helical segment; that stretch reads IGLTSPLMLSGTLMLLTALLV. The Cytoplasmic portion of the chain corresponds to 388–396; sequence TAKVKMKKS.

Belongs to the major facilitator superfamily. DHA1 family. NepI (TC 2.A.1.2.26) subfamily.

The protein localises to the cell inner membrane. The enzyme catalyses inosine(in) + H(+)(out) = inosine(out) + H(+)(in). It catalyses the reaction guanosine(in) + H(+)(out) = guanosine(out) + H(+)(in). In terms of biological role, involved in the efflux of purine ribonucleosides, such as inosine and guanosine. This Shigella flexneri protein is Purine ribonucleoside efflux pump NepI.